Consider the following 235-residue polypeptide: Large ribosomal subunit protein uL3 (235 aa).

The tract at residues Ser-138 to Phe-157 is disordered. An N5-methylglutamine modification is found at Gln-151.

The protein belongs to the universal ribosomal protein uL3 family. As to quaternary structure, part of the 50S ribosomal subunit. Forms a cluster with proteins L14 and L19. Post-translationally, methylated by PrmB.

One of the primary rRNA binding proteins, it binds directly near the 3'-end of the 23S rRNA, where it nucleates assembly of the 50S subunit. The polypeptide is Large ribosomal subunit protein uL3 (Rhodospirillum centenum (strain ATCC 51521 / SW)).